A 146-amino-acid chain; its full sequence is Acidic phospholipase A2 2 (146 aa).

Residues 1–21 form the signal peptide; that stretch reads MNPAHLLILAAVCVSSLGASS. Positions 22–27 are excised as a propeptide; the sequence is NRPMPL. Intrachain disulfides connect Cys38/Cys98, Cys53/Cys145, Cys55/Cys71, Cys70/Cys126, Cys77/Cys119, Cys87/Cys112, and Cys105/Cys117. Residues Tyr54, Gly56, and Gly58 each contribute to the Ca(2+) site. His74 is a catalytic residue. Asp75 contacts Ca(2+). Residue Asp120 is part of the active site.

Belongs to the phospholipase A2 family. Group I subfamily. D49 sub-subfamily. Requires Ca(2+) as cofactor. As to expression, expressed by the venom gland.

It localises to the secreted. It catalyses the reaction a 1,2-diacyl-sn-glycero-3-phosphocholine + H2O = a 1-acyl-sn-glycero-3-phosphocholine + a fatty acid + H(+). In terms of biological role, PLA2 catalyzes the calcium-dependent hydrolysis of the 2-acyl groups in 3-sn-phosphoglycerides. The protein is Acidic phospholipase A2 2 of Naja kaouthia (Monocled cobra).